The primary structure comprises 87 residues: HssA/B-like protein 7 (87 aa).

A compositionally biased stretch (polar residues) spans 1 to 22; sequence MSILSALTSISNPMKSTKSSVA. The segment at 1-23 is disordered; the sequence is MSILSALTSISNPMKSTKSSVAN.

This sequence belongs to the hssA/B family.

This is HssA/B-like protein 7 (hssl7) from Dictyostelium discoideum (Social amoeba).